The chain runs to 464 residues: Rab GDP-dissociation inhibitor (464 aa).

Belongs to the Rab GDI family. Interacts with the GDP-bound form of Rab GTPase YPT7.

Functionally, regulates the GDP/GTP exchange reaction of YPT7 by inhibiting the dissociation of GDP from it, and the subsequent binding of GTP to YTP7. The sequence is that of Rab GDP-dissociation inhibitor (GDI1) from Pyricularia oryzae (strain 70-15 / ATCC MYA-4617 / FGSC 8958) (Rice blast fungus).